We begin with the raw amino-acid sequence, 397 residues long: Tryptophan synthase beta chain (397 aa).

At Lys91 the chain carries N6-(pyridoxal phosphate)lysine.

This sequence belongs to the TrpB family. As to quaternary structure, tetramer of two alpha and two beta chains. Requires pyridoxal 5'-phosphate as cofactor.

It carries out the reaction (1S,2R)-1-C-(indol-3-yl)glycerol 3-phosphate + L-serine = D-glyceraldehyde 3-phosphate + L-tryptophan + H2O. It functions in the pathway amino-acid biosynthesis; L-tryptophan biosynthesis; L-tryptophan from chorismate: step 5/5. In terms of biological role, the beta subunit is responsible for the synthesis of L-tryptophan from indole and L-serine. This chain is Tryptophan synthase beta chain, found in Bacillus cereus (strain Q1).